A 427-amino-acid polypeptide reads, in one-letter code: UPF0229 protein YeaH (427 aa).

Residues 87–110 (RIERSQGGGGGSGSGQGQASQDGE) form a disordered region. Residues 92 to 102 (QGGGGGSGSGQ) show a composition bias toward gly residues.

The protein belongs to the UPF0229 family.

The protein is UPF0229 protein YeaH of Escherichia coli O6:K15:H31 (strain 536 / UPEC).